The chain runs to 122 residues: Large ribosomal subunit protein uL18 (122 aa).

The protein belongs to the universal ribosomal protein uL18 family. Part of the 50S ribosomal subunit; part of the 5S rRNA/L5/L18/L25 subcomplex. Contacts the 5S and 23S rRNAs.

Its function is as follows. This is one of the proteins that bind and probably mediate the attachment of the 5S RNA into the large ribosomal subunit, where it forms part of the central protuberance. This is Large ribosomal subunit protein uL18 from Thermotoga neapolitana (strain ATCC 49049 / DSM 4359 / NBRC 107923 / NS-E).